The chain runs to 152 residues: Xanthine-guanine phosphoribosyltransferase (152 aa).

5-phospho-alpha-D-ribose 1-diphosphate-binding positions include R37–G38, R69, and D88–T96. R69 is a GMP binding site. A Mg(2+)-binding site is contributed by D89. Guanine is bound by residues D92 and I135. 2 residues coordinate xanthine: D92 and I135. GMP-binding positions include D92 to T96 and W134 to I135.

This sequence belongs to the purine/pyrimidine phosphoribosyltransferase family. XGPT subfamily. As to quaternary structure, homotetramer. Requires Mg(2+) as cofactor.

The protein resides in the cell inner membrane. The catalysed reaction is GMP + diphosphate = guanine + 5-phospho-alpha-D-ribose 1-diphosphate. It catalyses the reaction XMP + diphosphate = xanthine + 5-phospho-alpha-D-ribose 1-diphosphate. It carries out the reaction IMP + diphosphate = hypoxanthine + 5-phospho-alpha-D-ribose 1-diphosphate. It participates in purine metabolism; GMP biosynthesis via salvage pathway; GMP from guanine: step 1/1. The protein operates within purine metabolism; XMP biosynthesis via salvage pathway; XMP from xanthine: step 1/1. Its function is as follows. Purine salvage pathway enzyme that catalyzes the transfer of the ribosyl-5-phosphate group from 5-phospho-alpha-D-ribose 1-diphosphate (PRPP) to the N9 position of the 6-oxopurines guanine and xanthine to form the corresponding ribonucleotides GMP (guanosine 5'-monophosphate) and XMP (xanthosine 5'-monophosphate), with the release of PPi. To a lesser extent, also acts on hypoxanthine. The chain is Xanthine-guanine phosphoribosyltransferase from Enterobacter sp. (strain 638).